Reading from the N-terminus, the 182-residue chain is NAD(P)H-quinone oxidoreductase subunit I, chloroplastic (182 aa).

4Fe-4S ferredoxin-type domains lie at 55 to 84 (GRIH…VDWK) and 95 to 124 (LNYS…MTEE). The [4Fe-4S] cluster site is built by Cys-64, Cys-67, Cys-70, Cys-74, Cys-104, Cys-107, Cys-110, and Cys-114.

It belongs to the complex I 23 kDa subunit family. In terms of assembly, NDH is composed of at least 16 different subunits, 5 of which are encoded in the nucleus. [4Fe-4S] cluster serves as cofactor.

The protein resides in the plastid. The protein localises to the chloroplast thylakoid membrane. The enzyme catalyses a plastoquinone + NADH + (n+1) H(+)(in) = a plastoquinol + NAD(+) + n H(+)(out). It carries out the reaction a plastoquinone + NADPH + (n+1) H(+)(in) = a plastoquinol + NADP(+) + n H(+)(out). In terms of biological role, NDH shuttles electrons from NAD(P)H:plastoquinone, via FMN and iron-sulfur (Fe-S) centers, to quinones in the photosynthetic chain and possibly in a chloroplast respiratory chain. The immediate electron acceptor for the enzyme in this species is believed to be plastoquinone. Couples the redox reaction to proton translocation, and thus conserves the redox energy in a proton gradient. This is NAD(P)H-quinone oxidoreductase subunit I, chloroplastic from Buxus microphylla (Littleleaf boxwood).